Consider the following 96-residue polypeptide: Co-chaperonin GroES (96 aa).

This sequence belongs to the GroES chaperonin family. As to quaternary structure, heptamer of 7 subunits arranged in a ring. Interacts with the chaperonin GroEL.

The protein resides in the cytoplasm. In terms of biological role, together with the chaperonin GroEL, plays an essential role in assisting protein folding. The GroEL-GroES system forms a nano-cage that allows encapsulation of the non-native substrate proteins and provides a physical environment optimized to promote and accelerate protein folding. GroES binds to the apical surface of the GroEL ring, thereby capping the opening of the GroEL channel. This Syntrophomonas wolfei subsp. wolfei (strain DSM 2245B / Goettingen) protein is Co-chaperonin GroES.